A 620-amino-acid chain; its full sequence is Sterile alpha motif domain-containing protein 15 (620 aa).

Residues 1-394 form a disordered region; sequence MSEVSGDYNS…PNYPAGKDKL (394 aa). Basic and acidic residues-rich tracts occupy residues 62 to 83, 106 to 125, and 135 to 180; these read TRTR…DLQR, IDPE…KSVE, and TKSE…HFKS. The segment covering 181 to 191 has biased composition (polar residues); it reads TEQSGTEQPEQ. The segment covering 233-242 has biased composition (basic residues); that stretch reads RPLKASKKAQ. The segment covering 261 to 270 has biased composition (acidic residues); it reads LLDDQEETQE. Composition is skewed to basic and acidic residues over residues 271–286, 295–315, 323–337, and 347–382; these read ESIK…DRKP, KSSE…DKDP, FPKE…KTGD, and IQEK…KPES. Positions 480-543 constitute an SAM domain; it reads WSPERVAEWI…SYHTRVLLGI (64 aa). Over residues 594 to 604 the composition is skewed to basic and acidic residues; that stretch reads EIKAEEKKEDA. The tract at residues 594-620 is disordered; that stretch reads EIKAEEKKEDALPENSLEENEELYEAT. Residues 609–620 show a composition bias toward acidic residues; sequence SLEENEELYEAT.

In Mus musculus (Mouse), this protein is Sterile alpha motif domain-containing protein 15 (Samd15).